A 66-amino-acid chain; its full sequence is Beta-toxin Cb2 (66 aa).

The LCN-type CS-alpha/beta domain occupies 1-66; the sequence is KEGYLVDLHT…VWPLPNKRCK (66 aa). Cystine bridges form between Cys12/Cys65, Cys16/Cys41, Cys25/Cys46, and Cys29/Cys48.

It belongs to the long (4 C-C) scorpion toxin superfamily. Sodium channel inhibitor family. Beta subfamily. In terms of tissue distribution, expressed by the venom gland.

It localises to the secreted. Beta toxins bind voltage-independently at site-4 of sodium channels (Nav) and reduces peak current and shifts the voltage of activation toward more negative potentials thereby affecting sodium channel activation and promoting spontaneous and repetitive firing. Has an inhibitory effect on voltage-gated sodium channel hNav1.6/SCN8A, affecting both the activation and inactivation processes. Also reduces the peak current of hNav1.5/SCN5A but does not shift its voltage of activation. This toxin is active against mammals and lethal to mice. This Centruroides baergi (Scorpion) protein is Beta-toxin Cb2.